The chain runs to 413 residues: Phosphopentomutase (413 aa).

6 residues coordinate Mn(2+): D11, D306, H311, D347, H348, and H359.

This sequence belongs to the phosphopentomutase family. The cofactor is Mn(2+).

It is found in the cytoplasm. It catalyses the reaction 2-deoxy-alpha-D-ribose 1-phosphate = 2-deoxy-D-ribose 5-phosphate. The enzyme catalyses alpha-D-ribose 1-phosphate = D-ribose 5-phosphate. It participates in carbohydrate degradation; 2-deoxy-D-ribose 1-phosphate degradation; D-glyceraldehyde 3-phosphate and acetaldehyde from 2-deoxy-alpha-D-ribose 1-phosphate: step 1/2. Functionally, isomerase that catalyzes the conversion of deoxy-ribose 1-phosphate (dRib-1-P) and ribose 1-phosphate (Rib-1-P) to deoxy-ribose 5-phosphate (dRib-5-P) and ribose 5-phosphate (Rib-5-P), respectively. In Helicobacter pylori (strain HPAG1), this protein is Phosphopentomutase.